The sequence spans 155 residues: uncharacterized protein (155 aa).

The transit peptide at 1–17 (MMRGASKRSISSAAVLL) directs the protein to the mitochondrion. Positions 111–155 (WHRQQKRSQRRRSVAKYEQREEAARVEKEEREARDREMVRELFRR) are disordered. Positions 113–124 (RQQKRSQRRRSV) are enriched in basic residues. Basic and acidic residues predominate over residues 125–155 (AKYEQREEAARVEKEEREARDREMVRELFRR).

It belongs to the prokaryotic/mitochondrial release factor family.

It localises to the mitochondrion. This is an uncharacterized protein from Saccharomyces cerevisiae (strain ATCC 204508 / S288c) (Baker's yeast).